Here is a 116-residue protein sequence, read N- to C-terminus: Sperm mitochondrial-associated cysteine-rich protein (116 aa).

Tandem repeats lie at residues 6-13, 14-21, 30-37, 38-45, 46-53, 54-61, and 62-68. The segment at 6-68 is 7 X 7 (OR 8) AA approximate repeats; that stretch reads KHSKCCPAKG…CQPKPPCCIQ (63 aa). The disordered stretch occupies residues 80–116; the sequence is VSPLNMESEPNSPQTQDKGCQTQQQPHSPQNESRPSK. Residues 93-104 are compositionally biased toward low complexity; the sequence is QTQDKGCQTQQQ. Residues 105 to 116 are compositionally biased toward polar residues; that stretch reads PHSPQNESRPSK.

Testis. Is selectively expressed in the spermatids of seminiferous tubules.

The protein localises to the cytoplasm. Its subcellular location is the mitochondrion membrane. Its function is as follows. Involved in sperm motility. Its absence is associated with genetic background dependent male infertility. Infertility may be due to reduced sperm motility in the female reproductive tract and inability to penetrate the oocyte zona pellucida. In Homo sapiens (Human), this protein is Sperm mitochondrial-associated cysteine-rich protein (SMCP).